A 382-amino-acid polypeptide reads, in one-letter code: 1-deoxy-D-xylulose 5-phosphate reductoisomerase (382 aa).

NADPH is bound by residues Thr-10, Gly-11, Ser-12, Ile-13, Asn-38, and Asn-120. Lys-121 lines the 1-deoxy-D-xylulose 5-phosphate pocket. Glu-122 lines the NADPH pocket. Residue Asp-146 coordinates Mn(2+). Residues Ser-147, Glu-148, Ser-172, and His-195 each contribute to the 1-deoxy-D-xylulose 5-phosphate site. Residue Glu-148 participates in Mn(2+) binding. Gly-201 is an NADPH binding site. 1-deoxy-D-xylulose 5-phosphate-binding residues include Ser-208, Asn-213, Lys-214, and Glu-217. Glu-217 is a Mn(2+) binding site.

It belongs to the DXR family. Mg(2+) is required as a cofactor. Requires Mn(2+) as cofactor.

It carries out the reaction 2-C-methyl-D-erythritol 4-phosphate + NADP(+) = 1-deoxy-D-xylulose 5-phosphate + NADPH + H(+). The protein operates within isoprenoid biosynthesis; isopentenyl diphosphate biosynthesis via DXP pathway; isopentenyl diphosphate from 1-deoxy-D-xylulose 5-phosphate: step 1/6. In terms of biological role, catalyzes the NADPH-dependent rearrangement and reduction of 1-deoxy-D-xylulose-5-phosphate (DXP) to 2-C-methyl-D-erythritol 4-phosphate (MEP). This chain is 1-deoxy-D-xylulose 5-phosphate reductoisomerase, found in Thermoanaerobacter sp. (strain X514).